Reading from the N-terminus, the 466-residue chain is Reticulophagy regulator 3 (466 aa).

The Cytoplasmic segment spans residues 1 to 80; sequence MEEAEGVAAA…WCLGLNAAFW (80 aa). The residue at position 26 (serine 26) is a Phosphoserine. Residues 81 to 101 traverse the membrane as a helical segment; that stretch reads FFALTSLRFVFLLAFSLMIIV. Topologically, residues 102–168 are lumenal; it reads CIDQWKNKIW…LLFKKQNPGK (67 aa). Residues 169 to 187 form a helical membrane-spanning segment; sequence FCLLSCGVLTFLAMLGRYI. Over 188–192 the chain is Cytoplasmic; the sequence is PGLLL. Residues 193–211 traverse the membrane as a helical segment; the sequence is SYLMLVIIMMWPLAVYHRL. Residues 212–381 lie on the Lumenal side of the membrane; the sequence is WDRAYVRLKP…ASRNEAALPE (170 aa). Residues 244–263 form a disordered region; it reads RRRALHSERATDSHSDSEEE. Basic and acidic residues predominate over residues 248-259; that stretch reads LHSERATDSHSD. The residue at position 254 (threonine 254) is a Phosphothreonine. 2 positions are modified to phosphoserine: serine 258 and serine 260. Threonine 283 is subject to Phosphothreonine. Serine 285, serine 288, serine 293, and serine 303 each carry phosphoserine. Positions 285–335 are disordered; the sequence is SEHSDAEVSCTENGTFNLSRGQTPLTEGSEDLDGHSDPEESFARDLPDFPS. Residues 294 to 310 are compositionally biased toward polar residues; that stretch reads CTENGTFNLSRGQTPLT. 2 positions are modified to phosphothreonine: threonine 307 and threonine 310. A phosphoserine mark is found at serine 313, serine 320, and serine 360. The span at 316-331 shows a compositional bias: basic and acidic residues; sequence LDGHSDPEESFARDLP. Residues 382–401 traverse the membrane as a helical segment; it reads LLLSSLPGGSNLTSNLASLV. The Cytoplasmic segment spans residues 402–466; it reads SQGMIQLALS…QLDPASSRSH (65 aa). The disordered stretch occupies residues 412 to 444; that stretch reads EASQTDPSGPPPRRATRGFLRAPSSDLDTDAEG. Threonine 440 is modified (phosphothreonine). An LIR motif motif is present at residues 445-450; it reads DDFELL.

It belongs to the RETREG family. Interacts with ATG8 family modifier proteins MAP1LC3A, MAP1LC3B, GABARAPL1 and GABARAPL2. Also interacts with ATG8 family modifier protein GABARAP. Interacts with CANX. Interacts with RTN4 isoform B. As to expression, widely expressed with highest levels in brain, lung, liver, muscle and spleen (protein level). Mainly expressed in the central nervous system and in parenchymatous organs including liver, lung and kidney.

The protein resides in the endoplasmic reticulum membrane. In terms of biological role, endoplasmic reticulum (ER)-anchored autophagy regulator which exists in an inactive state under basal conditions but is activated following cellular stress. When activated, induces ER fragmentation and mediates ER delivery into lysosomes through sequestration into autophagosomes via interaction with ATG8 family proteins. Promotes ER membrane curvature and ER tubulation required for subsequent ER fragmentation and engulfment into autophagosomes. Required for collagen quality control in a LIR motif-dependent manner. Mediates NRF1-enhanced neurite outgrowth. This Mus musculus (Mouse) protein is Reticulophagy regulator 3 (Retreg3).